The following is a 456-amino-acid chain: uncharacterized protein (456 aa).

One can recognise a YrdC-like domain in the interval 277–440 (IKNTKTIKQL…TKQLVRTTAK (164 aa)).

This is an uncharacterized protein from Mycoplasma genitalium (strain ATCC 33530 / DSM 19775 / NCTC 10195 / G37) (Mycoplasmoides genitalium).